Reading from the N-terminus, the 352-residue chain is Protein RecA (352 aa).

65-72 (GPESSGKT) contributes to the ATP binding site.

Belongs to the RecA family.

The protein resides in the cytoplasm. Functionally, can catalyze the hydrolysis of ATP in the presence of single-stranded DNA, the ATP-dependent uptake of single-stranded DNA by duplex DNA, and the ATP-dependent hybridization of homologous single-stranded DNAs. It interacts with LexA causing its activation and leading to its autocatalytic cleavage. The chain is Protein RecA from Pseudomonas fluorescens (strain SBW25).